The chain runs to 303 residues: Caspase-7 (303 aa).

The disordered stretch occupies residues 1-27 (MADDQNCAPELEKADPSGEDGVDAKPD). N-acetylalanine is present on alanine 2. Positions 2-23 (ADDQNCAPELEKADPSGEDGVD) are cleaved as a propeptide — N-terminally processed. Residues 10–27 (ELEKADPSGEDGVDAKPD) are compositionally biased toward basic and acidic residues. Serine 30 carries the post-translational modification Phosphoserine. The interval 38-41 (KKKK) is exosite. A loop L1 region spans residues 76–87 (KNFDKVTGMDVR). Histidine 144 is an active-site residue. Threonine 173 is subject to Phosphothreonine. The active site involves cysteine 186. The tract at residues 187–196 (RGTELDDGVQ) is loop L2. Residues 199 to 206 (SGPINETD) constitute a propeptide that is removed on maturation. Positions 226–238 (VPGYYSWRNPGKG) are loop L3. Phosphoserine is present on serine 239. Residues 274-288 (ESQCDDPCFNEKKQI) are loop L4.

The protein belongs to the peptidase C14A family. Heterotetramer that consists of two anti-parallel arranged heterodimers, each one formed by a 20 kDa (p20) and a 11 kDa (p11) subunit. Interacts with XIAP (via its second BIR domain); inhibiting CASP7 activity. Interacts with BIRC6/bruce. Interacts with ATXN3 (short isoform 1). Interacts with HSPA5. Cleavage by different proteases, such as granzyme B (GZMB), caspase-1 (CASP1), caspase-8 (CASP8) or caspase-9 (CASP9) generate the two active subunits. Its involvement in different programmed cell death processes is probably specified by the protease that activates CASP7. Cleaved and activated by initiator caspases (CASP8 and/or CASP9), leading to execution phase of apoptosis. Cleavage and maturation by GZMB regulates granzyme-mediated programmed cell death. Cleaved and activated by CASP1 in response to bacterial infection. Propeptide domains can also be cleaved efficiently by CASP3. Active heterodimers between the small subunit of caspase-7 and the large subunit of CASP3, and vice versa, also occur. Also cleaved at the N-terminus at alternative sites by CAPN1, leading to its activation. Post-translationally, phosphorylation at Ser-30 and Ser-239 by PAK2 inhibits its activity. Phosphorylation at Ser-30 prevents cleavage and activation by initiator caspase CASP9, while phosphorylation at Ser-239 prevents thiol protease activity by preventing substrate-binding. In terms of processing, ubiquitinated by BIRC6; this activity is inhibited by DIABLO/SMAC.

Its subcellular location is the cytoplasm. The protein resides in the cytosol. The protein localises to the nucleus. It localises to the secreted. It is found in the extracellular space. The catalysed reaction is Strict requirement for an Asp residue at position P1 and has a preferred cleavage sequence of Asp-Glu-Val-Asp-|-.. Its activity is regulated as follows. During activation, the N-terminal disordered prodomain is removed by cleavage. Concomitantly, double cleavage gives rise to a large Caspase-7 subunit p20 and a small Caspase-7 subunit p11. The two large and two small subunits then assemble to form the active CASP7 complex. Can be cleaved and activated by different caspases, depending on the context. Cleaved and activated by initiator caspases (CASP8 and/or CASP9), leading to execution phase of apoptosis. Cleavage and maturation by GZMB regulates granzyme-mediated programmed cell death. Cleavage and maturation by CASP1 regulates pyroptosis. Inhibited by XIAP, which directly binds to the active site pocket and obstructs substrate entry. Phosphorylation at Ser-30 and Ser-239 by PAK2 inhibits its activity. Inhibited by BIRC6; following inhibition of BIRC6-caspase binding by DIABLO/SMAC, BIRC6 is subjected to caspase cleavage, leading to an increase in active caspases. Its function is as follows. Thiol protease involved in different programmed cell death processes, such as apoptosis, pyroptosis or granzyme-mediated programmed cell death, by proteolytically cleaving target proteins. Has a marked preference for Asp-Glu-Val-Asp (DEVD) consensus sequences, with some plasticity for alternate non-canonical sequences. Its involvement in the different programmed cell death processes is probably determined by upstream proteases that activate CASP7. Acts as an effector caspase involved in the execution phase of apoptosis: following cleavage and activation by initiator caspases (CASP8 and/or CASP9), mediates execution of apoptosis by catalyzing cleavage of proteins, such as CLSPN, PARP1, PTGES3 and YY1. Compared to CASP3, acts as a minor executioner caspase and cleaves a limited set of target proteins. Acts as a key regulator of the inflammatory response in response to bacterial infection by catalyzing cleavage and activation of the sphingomyelin phosphodiesterase SMPD1 in the extracellular milieu, thereby promoting membrane repair. Regulates pyroptosis in intestinal epithelial cells: cleaved and activated by CASP1 in response to S.typhimurium infection, promoting its secretion to the extracellular milieu, where it catalyzes activation of SMPD1, generating ceramides that repair membranes and counteract the action of gasdermin-D (GSDMD) pores. Regulates granzyme-mediated programmed cell death in hepatocytes: cleaved and activated by granzyme B (GZMB) in response to bacterial infection, promoting its secretion to the extracellular milieu, where it catalyzes activation of SMPD1, generating ceramides that repair membranes and counteract the action of perforin (PRF1) pores. Following cleavage by CASP1 in response to inflammasome activation, catalyzes processing and inactivation of PARP1, alleviating the transcription repressor activity of PARP1. Acts as an inhibitor of type I interferon production during virus-induced apoptosis by mediating cleavage of antiviral proteins CGAS, IRF3 and MAVS, thereby preventing cytokine overproduction. Cleaves and activates sterol regulatory element binding proteins (SREBPs). Cleaves phospholipid scramblase proteins XKR4, XKR8 and XKR9. Cleaves BIRC6 following inhibition of BIRC6-caspase binding by DIABLO/SMAC. The protein is Caspase-7 (CASP7) of Mesocricetus auratus (Golden hamster).